We begin with the raw amino-acid sequence, 586 residues long: Kelch-like protein 7 (586 aa).

Positions 44 to 111 constitute a BTB domain; it reads CDVILTVQER…AYTARISVNS (68 aa). Residues 146–248 enclose the BACK domain; it reads CLGISVLAEC…SKNFLSKTVQ (103 aa). Kelch repeat units lie at residues 294-336, 337-382, 383-430, 431-481, 483-528, and 530-575; these read RIAL…FWDN, VVYI…AAEG, KIYT…EANG, LIYV…FVKD, IFAV…AVGS, and IYVL…CVVD.

As to quaternary structure, homodimer. Component of the BCR(KLHL7) E3 ubiquitin ligase complex, at least composed of CUL3 and KLHL7 and RBX1.

The protein localises to the nucleus. It is found in the cytoplasm. It participates in protein modification; protein ubiquitination. In terms of biological role, substrate-specific adapter of a BCR (BTB-CUL3-RBX1) E3 ubiquitin ligase complex. The BCR(KLHL7) complex acts by mediating ubiquitination and subsequent degradation of substrate proteins. Probably mediates 'Lys-48'-linked ubiquitination. The protein is Kelch-like protein 7 (Klhl7) of Mus musculus (Mouse).